Consider the following 397-residue polypeptide: Tryptophan synthase beta chain (397 aa).

Lys-87 carries the post-translational modification N6-(pyridoxal phosphate)lysine.

The protein belongs to the TrpB family. As to quaternary structure, tetramer of two alpha and two beta chains. Requires pyridoxal 5'-phosphate as cofactor.

It catalyses the reaction (1S,2R)-1-C-(indol-3-yl)glycerol 3-phosphate + L-serine = D-glyceraldehyde 3-phosphate + L-tryptophan + H2O. It participates in amino-acid biosynthesis; L-tryptophan biosynthesis; L-tryptophan from chorismate: step 5/5. Its function is as follows. The beta subunit is responsible for the synthesis of L-tryptophan from indole and L-serine. The protein is Tryptophan synthase beta chain of Escherichia coli O139:H28 (strain E24377A / ETEC).